The sequence spans 92 residues: Signal recognition particle 19 kDa protein (92 aa).

Belongs to the SRP19 family. Part of the signal recognition particle protein translocation system, which is composed of SRP and FtsY. Archaeal SRP consists of a 7S RNA molecule of 300 nucleotides and two protein subunits: SRP54 and SRP19.

It is found in the cytoplasm. In terms of biological role, involved in targeting and insertion of nascent membrane proteins into the cytoplasmic membrane. Binds directly to 7S RNA and mediates binding of the 54 kDa subunit of the SRP. This chain is Signal recognition particle 19 kDa protein, found in Halorubrum lacusprofundi (strain ATCC 49239 / DSM 5036 / JCM 8891 / ACAM 34).